The sequence spans 535 residues: CTP synthase (535 aa).

The amidoligase domain stretch occupies residues M1 to L268. S14 is a CTP binding site. S14 is a binding site for UTP. S15–I20 lines the ATP pocket. Y55 is a binding site for L-glutamine. ATP is bound at residue D72. The Mg(2+) site is built by D72 and E142. CTP-binding positions include D149–E151, K189–Q194, and K225. Residues K189–Q194 and K225 each bind UTP. The region spanning K293–N535 is the Glutamine amidotransferase type-1 domain. Residue G355 participates in L-glutamine binding. The active-site Nucleophile; for glutamine hydrolysis is the C382. L-glutamine contacts are provided by residues L383–Q386, E406, and R464. Residues H509 and E511 contribute to the active site.

The protein belongs to the CTP synthase family. As to quaternary structure, homotetramer.

The enzyme catalyses UTP + L-glutamine + ATP + H2O = CTP + L-glutamate + ADP + phosphate + 2 H(+). It catalyses the reaction L-glutamine + H2O = L-glutamate + NH4(+). It carries out the reaction UTP + NH4(+) + ATP = CTP + ADP + phosphate + 2 H(+). Its pathway is pyrimidine metabolism; CTP biosynthesis via de novo pathway; CTP from UDP: step 2/2. With respect to regulation, allosterically activated by GTP, when glutamine is the substrate; GTP has no effect on the reaction when ammonia is the substrate. The allosteric effector GTP functions by stabilizing the protein conformation that binds the tetrahedral intermediate(s) formed during glutamine hydrolysis. Inhibited by the product CTP, via allosteric rather than competitive inhibition. Its function is as follows. Catalyzes the ATP-dependent amination of UTP to CTP with either L-glutamine or ammonia as the source of nitrogen. Regulates intracellular CTP levels through interactions with the four ribonucleotide triphosphates. The protein is CTP synthase of Streptococcus pneumoniae (strain ATCC BAA-255 / R6).